The following is a 187-amino-acid chain: Threonylcarbamoyl-AMP synthase (187 aa).

The 184-residue stretch at 4–187 folds into the YrdC-like domain; it reads NHTDDPFLLD…GHSGQTIRDN (184 aa). The interval 168–187 is disordered; it reads GSRSPSKIRHGHSGQTIRDN.

It belongs to the SUA5 family. TsaC subfamily.

The protein localises to the cytoplasm. The catalysed reaction is L-threonine + hydrogencarbonate + ATP = L-threonylcarbamoyladenylate + diphosphate + H2O. In terms of biological role, required for the formation of a threonylcarbamoyl group on adenosine at position 37 (t(6)A37) in tRNAs that read codons beginning with adenine. Catalyzes the conversion of L-threonine, HCO(3)(-)/CO(2) and ATP to give threonylcarbamoyl-AMP (TC-AMP) as the acyladenylate intermediate, with the release of diphosphate. The polypeptide is Threonylcarbamoyl-AMP synthase (Pseudoalteromonas atlantica (strain T6c / ATCC BAA-1087)).